We begin with the raw amino-acid sequence, 310 residues long: MDNDKIDQHSDEIEVESEEKERGKKIEIDEDRLPSRAMAIHEHIRQDGEKELERDAMALLWSAIAAGLSMGASLLAKGIFQVELEGVPGSFLLENLGYTFGFIIVIMARQQLFTENTVTAVLPVMQKPTMSNVGLLIRLWGVVLLGNILGTGIAAWAFEYMPIFNEETRDAFVKIGMDVMKNTPSEMFANAIISGWLIATMVWMFPAAGAAKIVVIILMTWLIALGDTTHIVVGSVEILYLVFNGTLHWSDFIWPFALPTLAGNICGGTFIFALMSHAQIRNDMSNKRKAEARQKAERAENIKKNYKNPA.

Positions 1 to 12 (MDNDKIDQHSDE) are enriched in basic and acidic residues. Residues 1-27 (MDNDKIDQHSDEIEVESEEKERGKKIE) are disordered. The Cytoplasmic portion of the chain corresponds to 1 to 58 (MDNDKIDQHSDEIEVESEEKERGKKIEIDEDRLPSRAMAIHEHIRQDGEKELERDAMA). A helical membrane pass occupies residues 59–81 (LLWSAIAAGLSMGASLLAKGIFQ). At 82 to 90 (VELEGVPGS) the chain is on the periplasmic side. A helical transmembrane segment spans residues 91-113 (FLLENLGYTFGFIIVIMARQQLF). Residues 114 to 133 (TENTVTAVLPVMQKPTMSNV) are Cytoplasmic-facing. The helical transmembrane segment at 134 to 156 (GLLIRLWGVVLLGNILGTGIAAW) threads the bilayer. Residues 157 to 186 (AFEYMPIFNEETRDAFVKIGMDVMKNTPSE) are Periplasmic-facing. Residues 187–206 (MFANAIISGWLIATMVWMFP) form a helical membrane-spanning segment. Residues 207–212 (AAGAAK) lie on the Cytoplasmic side of the membrane. Residues 213–232 (IVVIILMTWLIALGDTTHIV) form a helical membrane-spanning segment. The Periplasmic portion of the chain corresponds to 233-251 (VGSVEILYLVFNGTLHWSD). Residues 252–274 (FIWPFALPTLAGNICGGTFIFAL) form a helical membrane-spanning segment. Residues 275–310 (MSHAQIRNDMSNKRKAEARQKAERAENIKKNYKNPA) lie on the Cytoplasmic side of the membrane. The segment covering 291–303 (EARQKAERAENIK) has biased composition (basic and acidic residues). The segment at 291 to 310 (EARQKAERAENIKKNYKNPA) is disordered.

It is found in the cell inner membrane. The chain is Inner membrane protein YfdC (yfdC) from Escherichia coli (strain K12).